Consider the following 440-residue polypeptide: Chromosome partition protein MukF (440 aa).

Residues 208 to 236 are leucine-zipper; it reads LSETSGTLRELQDTLEAAGDKLQANLLRI.

The protein belongs to the MukF family. As to quaternary structure, interacts, and probably forms a ternary complex, with MukE and MukB via its C-terminal region. The complex formation is stimulated by calcium or magnesium. It is required for an interaction between MukE and MukB.

The protein localises to the cytoplasm. The protein resides in the nucleoid. Involved in chromosome condensation, segregation and cell cycle progression. May participate in facilitating chromosome segregation by condensation DNA from both sides of a centrally located replisome during cell division. Not required for mini-F plasmid partitioning. Probably acts via its interaction with MukB and MukE. Overexpression results in anucleate cells. It has a calcium binding activity. The protein is Chromosome partition protein MukF of Escherichia coli O9:H4 (strain HS).